The primary structure comprises 123 residues: Histone H1-like protein HC1 (123 aa).

Residues 54 to 123 (IKAEKSGLLK…KPSKARGFRK (70 aa)) are disordered. Over residues 61–75 (LLKRKPSTKAPAKVK) the composition is skewed to basic residues. Over residues 85 to 102 (KSSAAAAKTSKAVKASKP) the composition is skewed to low complexity. Positions 103 to 123 (ASKKTAAKKVKKPSKARGFRK) are enriched in basic residues.

The protein belongs to the histone H1/H5 family. HCT subfamily.

Its function is as follows. Might have a role analogous to that of eukaryotic histone proteins. In Chlamydia pneumoniae (Chlamydophila pneumoniae), this protein is Histone H1-like protein HC1 (hctA).